Reading from the N-terminus, the 776-residue chain is Conserved oligomeric Golgi complex subunit 4 (776 aa).

Phosphoserine is present on residues Ser342 and Ser345.

Belongs to the COG4 family. As to quaternary structure, component of the conserved oligomeric Golgi complex which is composed of eight different subunits and is required for normal Golgi morphology and localization.

Its subcellular location is the golgi apparatus membrane. Functionally, required for normal Golgi function. This chain is Conserved oligomeric Golgi complex subunit 4, found in Drosophila melanogaster (Fruit fly).